A 749-amino-acid chain; its full sequence is Cytosolic phospholipase A2 (749 aa).

A phospholipid binding region spans residues 1-178 (MSFIDPYQHI…MKKLLGPKNS (178 aa)). Position 2 is a phosphoserine (Ser2). In terms of domain architecture, C2 spans 6 to 122 (PYQHIIVEHH…KVGEKKQVPF (117 aa)). Asp40, Thr41, Asp43, Asn65, Asp93, Ala94, and Asn95 together coordinate Ca(2+). Residues 140–740 (SSPDLRFSMA…SSVEARRFFN (601 aa)) enclose the PLA2c domain. Ser228 (nucleophile) is an active-site residue. Position 268 is a phosphothreonine (Thr268). A disordered region spans residues 426-458 (AKHIVSNDSSDSDDESQGPKGTEHEEAEREYQN). Phosphoserine is present on residues Ser434, Ser435, and Ser437. The span at 446–457 (GTEHEEAEREYQ) shows a compositional bias: basic and acidic residues. Ser505 carries the phosphoserine; by MAPK modification. Ser515 carries the phosphoserine modification. Lys541 is covalently cross-linked (Glycyl lysine isopeptide (Lys-Gly) (interchain with G-Cter in SUMO2)). Asp549 serves as the catalytic Proton acceptor. Residue Lys606 forms a Glycyl lysine isopeptide (Lys-Gly) (interchain with G-Cter in SUMO2) linkage. Residues Ser727 and Ser729 each carry the phosphoserine modification.

In terms of assembly, interacts with KAT5. In terms of processing, phosphorylated at both Ser-505 and Ser-727 in response to mitogenic stimuli. Detected in granulosa cells after stimulation with chorionic gonadotropin (at protein level).

It is found in the cytoplasm. It localises to the golgi apparatus membrane. The protein resides in the nucleus envelope. The catalysed reaction is a 1,2-diacyl-sn-glycero-3-phosphocholine + H2O = a 1-acyl-sn-glycero-3-phosphocholine + a fatty acid + H(+). It catalyses the reaction a 1-O-alkyl-2-acyl-sn-glycero-3-phosphocholine + H2O = a 1-O-alkyl-sn-glycero-3-phosphocholine + a fatty acid + H(+). The enzyme catalyses a 1-acyl-sn-glycero-3-phosphocholine + H2O = sn-glycerol 3-phosphocholine + a fatty acid + H(+). It carries out the reaction 1-hexadecanoyl-2-(5Z,8Z,11Z,14Z-eicosatetraenoyl)-sn-glycero-3-phosphocholine + H2O = 1-hexadecanoyl-sn-glycero-3-phosphocholine + (5Z,8Z,11Z,14Z)-eicosatetraenoate + H(+). The catalysed reaction is 1,2-di-(5Z,8Z,11Z,14Z-eicosatetraenoyl)-sn-glycero-3-phosphocholine + H2O = 1-(5Z,8Z,11Z,14Z-eicosatetraenoyl)-sn-glycero-3-phosphocholine + (5Z,8Z,11Z,14Z)-eicosatetraenoate + H(+). It catalyses the reaction 1-octadecanoyl-2-(5Z,8Z,11Z,14Z-eicosatetraenoyl)-sn-glycero-3-phosphocholine + H2O = 1-octadecanoyl-sn-glycero-3-phosphocholine + (5Z,8Z,11Z,14Z)-eicosatetraenoate + H(+). The enzyme catalyses 1-hexadecanoyl-2-(9Z,12Z-octadecadienoyl)-sn-glycero-3-phosphocholine + H2O = (9Z,12Z)-octadecadienoate + 1-hexadecanoyl-sn-glycero-3-phosphocholine + H(+). It carries out the reaction 1-octadecanoyl-2-(9Z,12Z,15Z-octadecatrienoyl)-sn-glycero-3-phosphocholine + H2O = (9Z,12Z,15Z)-octadecatrienoate + 1-octadecanoyl-sn-glycero-3-phosphocholine + H(+). The catalysed reaction is 1-(5Z,8Z,11Z,14Z-eicosatetraenoyl)-2-hexadecanoyl-sn-glycero-3-phosphocholine + H2O = 1-(5Z,8Z,11Z,14Z-eicosatetraenoyl)-sn-glycero-3-phosphocholine + hexadecanoate + H(+). It catalyses the reaction 1-O-hexadecyl-2-(5Z,8Z,11Z,14Z)-eicosatetraenoyl-sn-glycero-3-phosphocholine + H2O = 1-O-hexadecyl-sn-glycero-3-phosphocholine + (5Z,8Z,11Z,14Z)-eicosatetraenoate + H(+). The enzyme catalyses 1,2-di-(9Z-octadecenoyl)-sn-glycero-3-phospho-(1'-sn-glycerol) + H2O = 1-(9Z-octadecenoyl)-sn-glycero-3-phospho-(1'-sn-glycerol) + (9Z)-octadecenoate + H(+). It carries out the reaction 1-octadecanoyl-2-(5Z,8Z,11Z,14Z-eicosatetraenoyl)-sn-glycero-3-phosphate + H2O = 1-octadecanoyl-sn-glycero-3-phosphate + (5Z,8Z,11Z,14Z)-eicosatetraenoate + H(+). The catalysed reaction is 1-hexadecanoyl-sn-glycero-3-phosphocholine + H2O = sn-glycerol 3-phosphocholine + hexadecanoate + H(+). It catalyses the reaction 2-(prostaglandin E2)-sn-glycero-3-phosphoethanolamine + H2O = sn-glycero-3-phosphoethanolamine + prostaglandin E2 + H(+). The enzyme catalyses 2-[(15S)-hydroxy-(5Z,8Z,11Z,13E)-eicosatetraenoyl]-sn-glycero-3-phosphocholine + H2O = (15S)-hydroxy-(5Z,8Z,11Z,13E)-eicosatetraenoate + sn-glycerol 3-phosphocholine + H(+). It carries out the reaction 2-[(15R)-hydroxy-(5Z,8Z,11Z,13E)-eicosatetraenoyl]-sn-glycero-3-phosphocholine + H2O = (15R)-hydroxy-(5Z,8Z,11Z,13E)-eicosatetraenoate + sn-glycerol 3-phosphocholine + H(+). The catalysed reaction is 2-(prostaglandin E2)-sn-glycero-3-phosphocholine + H2O = prostaglandin E2 + sn-glycerol 3-phosphocholine + H(+). It catalyses the reaction 2-[(11R)-hydroxy-(5Z,8Z,12E,14Z)-eicosatetraenoyl]-sn-glycero-3-phosphocholine + H2O = (11R)-hydroxy-(5Z,8Z,12E,14Z)-eicosatetraenoate + sn-glycerol 3-phosphocholine + H(+). The enzyme catalyses 1-(5Z,8Z,11Z,14Z-eicosatetraenoyl)-2-O-hexadecyl-sn-glycero-3-phosphocholine + H2O = 2-O-hexadecyl-sn-glycero-3-phosphocholine + (5Z,8Z,11Z,14Z)-eicosatetraenoate + H(+). It carries out the reaction 1-octadecanoyl-2-(5Z,8Z,11Z,14Z-eicosatetraenoyl)-sn-glycero-3-phosphocholine + glycerol = 1-(5Z,8Z,11Z,14Z-eicosatetraenoyl)-glycerol + 1-octadecanoyl-sn-glycero-3-phosphocholine. The catalysed reaction is 1-octadecanoyl-2-(9Z,12Z,15Z-octadecatrienoyl)-sn-glycero-3-phosphocholine + glycerol = 1-(9Z,12Z,15Z-octadecatrienoyl)-glycerol + 1-octadecanoyl-sn-glycero-3-phosphocholine. It participates in membrane lipid metabolism; glycerophospholipid metabolism. Its pathway is lipid metabolism; arachidonate metabolism. The protein operates within lipid metabolism; prostaglandin biosynthesis. It functions in the pathway lipid metabolism; leukotriene B4 biosynthesis. With respect to regulation, activated by cytosolic calcium, which is necessary for binding to membrane lipids. Activated by phosphorylation in response to mitogenic stimuli. Functionally, has primarily calcium-dependent phospholipase and lysophospholipase activities, with a major role in membrane lipid remodeling and biosynthesis of lipid mediators of the inflammatory response. Plays an important role in embryo implantation and parturition through its ability to trigger prostanoid production. Preferentially hydrolyzes the ester bond of the fatty acyl group attached at sn-2 position of phospholipids (phospholipase A2 activity). Selectively hydrolyzes sn-2 arachidonoyl group from membrane phospholipids, providing the precursor for eicosanoid biosynthesis via the cyclooxygenase pathway. In an alternative pathway of eicosanoid biosynthesis, hydrolyzes sn-2 fatty acyl chain of eicosanoid lysophopholipids to release free bioactive eicosanoids. Hydrolyzes the ester bond of the fatty acyl group attached at sn-1 position of phospholipids (phospholipase A1 activity) only if an ether linkage rather than an ester linkage is present at the sn-2 position. This hydrolysis is not stereospecific. Has calcium-independent phospholipase A2 and lysophospholipase activities in the presence of phosphoinositides. Has O-acyltransferase activity. Catalyzes the transfer of fatty acyl chains from phospholipids to a primary hydroxyl group of glycerol (sn-1 or sn-3), potentially contributing to monoacylglycerol synthesis. The chain is Cytosolic phospholipase A2 (PLA2G4A) from Bos taurus (Bovine).